Reading from the N-terminus, the 179-residue chain is Replication restart protein DnaT (179 aa).

A compositionally biased stretch (polar residues) spans 151–168 (SRSSNGGMPQRDINSVSE). The tract at residues 151-179 (SRSSNGGMPQRDINSVSEPDNHIPPGFRG) is disordered.

Belongs to the DnaT family. As to quaternary structure, homooligomerizes. Interacts with PriB. Component of the replication restart primosome. Primosome assembly occurs via a 'hand-off' mechanism. PriA binds to replication forks, subsequently PriB then DnaT bind; DnaT then displaces ssDNA to generate the helicase loading substrate.

Functionally, involved in the restart of stalled replication forks, which reloads the replicative helicase on sites other than the origin of replication. Can function in multiple replication restart pathways. Displaces ssDNA from a PriB-ssDNA complex. Probably forms a spiral filament on ssDNA. This is Replication restart protein DnaT from Salmonella schwarzengrund (strain CVM19633).